The chain runs to 488 residues: Germacrene A hydroxylase (488 aa).

Topologically, residues Met-1 to Thr-6 are cytoplasmic. Residues Thr-7–Thr-23 traverse the membrane as a helical; Signal-anchor for type II membrane protein segment. At Arg-24 to Phe-488 the chain is on the lumenal side. Residues Asn-169, Asn-260, and Asn-379 are each glycosylated (N-linked (GlcNAc...) asparagine). Heme is bound at residue Cys-432.

It belongs to the cytochrome P450 family. Heme serves as cofactor.

The protein resides in the endoplasmic reticulum membrane. The catalysed reaction is (+)-(R)-germacrene A + 3 reduced [NADPH--hemoprotein reductase] + 3 O2 = germacra-1(10),4,11(13)-trien-12-oate + 3 oxidized [NADPH--hemoprotein reductase] + 4 H2O + 4 H(+). It functions in the pathway secondary metabolite biosynthesis; terpenoid biosynthesis. Functionally, involved in the biosynthesis of germacrene-derived sesquiterpene lactones. Catalyzes three consecutive oxidations of germacrene A to produce germacrene A acid. Could also catalyze the three-step oxidation of non-natural substrate amorphadiene to artemisinic acid. This is Germacrene A hydroxylase from Lactuca sativa (Garden lettuce).